Reading from the N-terminus, the 140-residue chain is Nucleoside diphosphate kinase (140 aa).

Residues K11, F59, R87, T93, R104, and N114 each contribute to the ATP site. The active-site Pros-phosphohistidine intermediate is the H117.

This sequence belongs to the NDK family. Homotetramer. The cofactor is Mg(2+).

It is found in the cytoplasm. It catalyses the reaction a 2'-deoxyribonucleoside 5'-diphosphate + ATP = a 2'-deoxyribonucleoside 5'-triphosphate + ADP. The enzyme catalyses a ribonucleoside 5'-diphosphate + ATP = a ribonucleoside 5'-triphosphate + ADP. Functionally, major role in the synthesis of nucleoside triphosphates other than ATP. The ATP gamma phosphate is transferred to the NDP beta phosphate via a ping-pong mechanism, using a phosphorylated active-site intermediate. The chain is Nucleoside diphosphate kinase from Xanthobacter autotrophicus (strain ATCC BAA-1158 / Py2).